The following is a 37-amino-acid chain: Hemextin B (37 aa).

In terms of assembly, heterotetramer composed of 2 hemextin A and 2 hemextin B chains; non-covalently linked. Does not exist as a complex in the crude venom. In terms of processing, may contain several disulfide bonds. As to expression, expressed by the venom gland.

It is found in the secreted. In terms of biological role, hemextin B (monomer): does not show anticoagulant activity. Seems only to synergitically enhance hemextin A activity. Functionally, hemextin AB complex: specifically inhibits the activation of FX (F10) by the TF-FVIIa complex (extrinsic tenase complex (ETC)) (IC(50)= 100 nM, Ki=50 nM) by non-competitively inhibiting the enzymatic activity of FVIIa. The sequence is that of Hemextin B from Hemachatus haemachatus (Rinkhals).